We begin with the raw amino-acid sequence, 216 residues long: DNA repair and recombination protein RadB (216 aa).

This sequence belongs to the eukaryotic RecA-like protein family. RadB subfamily.

Functionally, involved in DNA repair and in homologous recombination. May regulate the cleavage reactions of the branch-structured DNA. Has a very weak ATPase activity that is not stimulated by DNA. Binds DNA but does not promote DNA strands exchange. The chain is DNA repair and recombination protein RadB from Methanococcus maripaludis (strain C5 / ATCC BAA-1333).